The sequence spans 1363 residues: Tonsoku-like protein (1363 aa).

8 TPR repeats span residues 27–60, 67–100, 107–147, 162–195, 202–235, 242–275, 311–344, and 352–385; these read AAYCHQLGELLASHGRFKDALEEHQQELHLLESV, AVAHRKIGERLAEMENYSAALKHQHLYLDLAGSL, QRAW…VDEK, TRLYLNLGLTCESLQQTALCNNYFKKSIFLAEQN, FRARYNLGAIHWRGGQHSQAMRCLEGARECARAM, SECCVLVSQVLQDLGDFLAAKRALKKAYRLGSQK, MAICEQLGDLFSKAGDFPKAAEAYQKQLHLAELL, and AVIHVSLATTLGDMKDHRKAVHHYEEELRLRKGN. The segment at 460 to 511 is disordered; it reads SMAKDTEEEEEEEEEEEEEASEAPETSELELSESEDDADGLSQQLEEDEELQ. Positions 465–510 are enriched in acidic residues; sequence TEEEEEEEEEEEEEASEAPETSELELSESEDDADGLSQQLEEDEEL. ANK repeat units follow at residues 528 to 557, 561 to 590, and 597 to 626; these read MGETLLHRACIEGQLRRVQDLVKQGHPLNP, CGWTPLHEACNYGHLEIVRFLLDHGAAVDD, and DGITPLHDALNCGHFEVAELLIERGASVTL. The interval 662–786 is disordered; the sequence is ERLQMASSGQ…KSRETATSSA (125 aa). A compositionally biased stretch (polar residues) spans 666 to 684; the sequence is MASSGQASRSSPALQTIPS. The span at 692 to 713 shows a compositional bias: pro residues; it reads TSPPSSPCPEPSSYTPRPPEAS. The segment covering 771-780 has biased composition (basic and acidic residues); that stretch reads KIPDPPKSRE. The residue at position 796 (R796) is an Omega-N-methylarginine. Disordered regions lie at residues 841-866 and 883-909; these read PLTRSGRPSTSVSDYERCPARPRTRV and AGDGSLNAEPAENPSVPRTSGPNKENY. Positions 842–853 are enriched in polar residues; it reads LTRSGRPSTSVS. LRR repeat units follow at residues 1060–1081, 1088–1108, 1119–1140, 1147–1168, 1179–1199, 1206–1214, 1238–1261, 1266–1287, 1296–1317, and 1322–1343; these read ALRELRLAGNRLGDACATELLA, NLVLLDLSSNHLGQEGLRQLV, NLEELDLSMNPLGDGCGQALAS, MLSTLRLQACGFSSSFFLSHQA, HLKTLSLSYNLLGAPALARVL, TLKRLDLSS, ALAHLTLSANCLGDKAVRELSRCL, SLTSLDLSANPEVSCASLEELL, GLSFLGLSGCSIQGPLNSDLWD, and QLQELQLCTKDLSTKDRDSVCQ.

The protein belongs to the Tonsoku family. In terms of assembly, component of the MMS22L-TONSL complex, a complex at least composed of MMS22L and TONSL/NFKBIL2. Interacts with the MCM complex, the FACT complex and the RPA complex. Interacts with MCM5; the interaction is direct. Binds histones, with a strong preference for histone H3.1 (histones H3.1 and H3-4/H3.1t). Interacts (via ANK repeats) with histone H4; specifically binds histone H4 lacking methylation at 'Lys-20' (H4K20me0). May interact with DNAJC9; the interaction seems to be histone-dependent.

Its subcellular location is the nucleus. The protein resides in the chromosome. It localises to the cytoplasm. Functionally, component of the MMS22L-TONSL complex, a complex that promotes homologous recombination-mediated repair of double-strand breaks (DSBs) at stalled or collapsed replication forks. The MMS22L-TONSL complex is required to maintain genome integrity during DNA replication. It mediates the assembly of RAD51 filaments on single-stranded DNA (ssDNA): the MMS22L-TONSL complex is recruited to DSBs following histone replacement by histone chaperones and eviction of the replication protein A complex (RPA/RP-A) from DSBs. Following recruitment to DSBs, the TONSL-MMS22L complex promotes recruitment of RAD51 filaments and subsequent homologous recombination. Within the complex, TONSL acts as a histone reader, which recognizes and binds newly synthesized histones following their replacement by histone chaperones. Specifically binds histone H4 lacking methylation at 'Lys-20' (H4K20me0) and histone H3.1. This Mus musculus (Mouse) protein is Tonsoku-like protein.